Here is a 340-residue protein sequence, read N- to C-terminus: CRISPR system Cmr subunit Cmr6 (340 aa).

It belongs to the CRISPR system Cmr6 family. In terms of assembly, part of the type III-B Cmr ribonucleoprotein (RNP) complex, an elongated RNP with Cmr2 and Cmr3 as the base, with Cmr4 and Cmr5 forming a helical core along the mature crRNA (39 or 45 nt in length), while the complex is capped by Cmr6 and Cmr1. The 5' end of the crRNA is bound to Cmr2 and Cmr3, while Cmr6 and a Cmr1 subunit (Cmr1-1 or Cmr1-2) cap the 3' end of the crRNA. The target RNA lies antiparallel to the crRNA, with its 5' end near Cmr1 and Cmr6 and its 3' end near Cmr2 and Cmr3; major target cleavage occurs nears the junction of Cmr1/Cmr6 and Cmr4/Cmr, with minor cleavage occurring at 6 nt intervals which coincide with the proposed spacing of Cmr4 subunits. Interacts with Cmr4 and Cmr5.

The protein localises to the cytoplasm. Its function is as follows. CRISPR (clustered regularly interspaced short palindromic repeat), is an adaptive immune system that provides protection against mobile genetic elements (viruses, transposable elements and conjugative plasmids). CRISPR clusters contain sequences complementary to antecedent mobile elements and target invading nucleic acids. CRISPR clusters are transcribed and processed into CRISPR RNA (crRNA), formerly called psiRNA (prokaryotic silencing) in this organism. Part of the Cmr ribonucleoprotein complex which has divalent cation-dependent endoribonuclease activity specific for ssRNA complementary to the crRNA (target RNA), generating 5' hydroxy- and 3' phosphate or 2'-3' cyclic phosphate termini. Cmr4 is probably the subunit that cleaves target RNA. Cmr complex does not cleave ssDNA complementary to the crRNA. Cleavage of invading RNA is guided by the crRNA; substrate cleavage occurs a fixed distance (14 nt) from the 3' end of the crRNA. In vitro reconstitution shows Cmr1-2 and Cmr5 are not absolutely necessary for target cleavage. The sequence is that of CRISPR system Cmr subunit Cmr6 from Pyrococcus furiosus (strain ATCC 43587 / DSM 3638 / JCM 8422 / Vc1).